We begin with the raw amino-acid sequence, 136 residues long: Histone H3.3 type 2 (136 aa).

Positions 1 to 43 are disordered; it reads MARTKQTARKSTGGKAPRKQLATKAARKSAPTTGGVKKPHRYR. N6,N6,N6-trimethyllysine; alternate is present on residues Lys5 and Lys10. An N6,N6-dimethyllysine; alternate mark is found at Lys5 and Lys10. Residues Lys5 and Lys10 each carry the N6-acetyllysine; alternate modification. Position 5 is an N6-methyllysine; alternate (Lys5). Phosphoserine is present on Ser11. 2 positions are modified to N6-acetyllysine: Lys15 and Lys24. An N6,N6,N6-trimethyllysine; alternate modification is found at Lys28. Lys28 carries the post-translational modification N6,N6-dimethyllysine; alternate. Residue Lys28 is modified to N6-methyllysine; alternate. Phosphoserine is present on Ser29. Lys37 is subject to N6,N6,N6-trimethyllysine; alternate. At Lys37 the chain carries N6-methyllysine; alternate. Lys80 carries the post-translational modification N6-methyllysine.

The protein belongs to the histone H3 family. In terms of assembly, the nucleosome is a histone octamer containing two molecules each of H2A, H2B, H3 and H4 assembled in one H3-H4 heterotetramer and two H2A-H2B heterodimers. The octamer wraps approximately 147 bp of DNA. In terms of processing, acetylation is generally linked to gene activation. Post-translationally, methylation at Lys-5 is linked to gene activation. Methylation at Lys-10 is linked to gene repression. As to expression, highly expressed in nearly all larval and adult nuclei. Expressed only at low levels in intestine. Expressed throughout all stages of gametogenesis.

It localises to the nucleus. It is found in the chromosome. Its function is as follows. Variant histone H3 which replaces conventional H3 in a wide range of nucleosomes in active genes. Constitutes the predominant form of histone H3 in non-dividing cells and is incorporated into chromatin independently of DNA synthesis. Deposited at sites of nucleosomal displacement throughout transcribed genes, suggesting that it represents an epigenetic imprint of transcriptionally active chromatin. Nucleosomes wrap and compact DNA into chromatin, limiting DNA accessibility to the cellular machineries which require DNA as a template. Histones thereby play a central role in transcription regulation, DNA repair, DNA replication and chromosomal stability. DNA accessibility is regulated via a complex set of post-translational modifications of histones, also called histone code, and nucleosome remodeling. The protein is Histone H3.3 type 2 (his-72) of Caenorhabditis elegans.